We begin with the raw amino-acid sequence, 205 residues long: MTGLTNRTVVIDGRGHLLGRLASVVAKYLLQGGKVAVVRCEELNLSGHFYRNKIKFLAYLRKRCNVNPARGPFHFRAPSRIFYKAVRGMIPHKTKRGQAALARLRVFDGIPSPYDKRRRVVVPIAMRVLTLRSDRKYCQVGRLSHEVGWHYQDVIKSLERKRKAKLRVTLKHNRELKKLTVKARENIAKAAEPFNKIIKSYGYEV.

The protein belongs to the universal ribosomal protein uL13 family.

This is Large ribosomal subunit protein uL13 (RpL13A) from Drosophila melanogaster (Fruit fly).